The primary structure comprises 1349 residues: MKSSRTVTLYFVLIVICSSEATWSRPAEPIVHPLILQEHELAGEELLRPKRAVAVGGPVAEEYTVDVEISFENVSFLESIRAHLNSLRFPVQGNGTDILSMAMTTVCTPTGNDLLCFCEKGYQWPEERCLSSLTCQEHDSALPGRYCNCLKGLPPQGPFCQLPETYITLKIKVRLNIGFQEDLENTSSALYRSYKTDLERAFRAGYRTLPGFRSVTVTQFTKGSVVVDYIVEVASAPLPGSIHKANEQVIQNLNQTYKMDYNSFQGTPSNETKFTVTPEFIFEGDNVTLECESEFVSSNTSWFYGEKRSDIQNSDKFSIHTSIINNISLVTRLTIFNFTQHDAGLYGCNVTLDIFEYGTVRKLDVTPIRILAKEERKVVCDNNPISLNCCSENIANWSRIEWKQEGKINIEGTPETDLESSCSTYTLKADGTQCPSGSSGTTVIYTCEFVSVYGAKGSKNIAVTFTSVANLTITPDPISVSEGQSFSITCLSDVSSFDEVYWNTSAGIKIHPRFYTMRRYRDGAESVLTVKTSTREWNGTYHCIFRYKNSYSIATKDVTVHPLPLESDIMMDPLEASGLCTSSHQFKCCIEENDGEEYIVTFHVDSSSFPAEREVIGKQACYTYSLPGKLPSRCPKDIDVFCHFTNAANSSVRSPSMKLTLVPGKNITCQDPIIGIGEPGKVIQKLCQFAGVSRSPGQTIGGTVTYKCVGSQWKEETRACISAPINGLLQLAKALIKSPSQDQKLPKYLRDLSVSTGKEEQDIRSSPGSLGAIISILDLLSTVPTQVNSEMMRDILATINVILDKSTLNSWEKLLQQQSNQSSQFLQSVERFSKALELGDSTPPFLFHPNVQMKSMVIKRGHAQMYQQKFVFTDSDLWGDVAIDECQLGSLQPDSSIVTVAFPTLKAILAQDGQRKTPSNSLVMTTTVSHNIVKPFRISMTFKNNHRSGGKPQCVFWNFSLANNTGGWDSSGCTVEDDGRDNRDRVFCKCNHLTSFSILMSPDSPDPGSLLKILLDIISYIGLGFSIVSLAACLVVEAMVWKSVTKNRTSYMRHICIVNIALCLLIADIWFIVAGAIHDGHYPLNETACVAATFFIHFFYLSVFFWMLTLGLMLFYRLIFILHDASKSTQKAIAFSLGYGCPLIISSITVGVTQPQEVYMRKNACWLNWEDTRALLAFAIPALIIVVVNVSITVVVITKILRPSVGDKPGKQEKSSLFQISKSIGVLTPLLGLTWGFGLATVIQGSNAVFHIIFTLLNAFQGLFILLFGCLWDQKVQEALLHKFSLSRWSSQHSKSTSLGSSTPVFSMSSPISRRFNNLFGKTGTYNVSTPETTSSSVENSSSAYSLLN.

A signal peptide spans 1–24; sequence MKSSRTVTLYFVLIVICSSEATWS. Over 25-1016 the chain is Extracellular; sequence RPAEPIVHPL…PGSLLKILLD (992 aa). Asn73, Asn94, Asn185, Asn254, Asn270, Asn286, Asn299, Asn326, Asn337, Asn349, Asn396, Asn470, Asn503, Asn538, Asn649, and Asn666 each carry an N-linked (GlcNAc...) asparagine glycan. Residues 163 to 271 form the SEA domain; it reads PETYITLKIK…NSFQGTPSNE (109 aa). 3 Ig-like domains span residues 268-366, 367-464, and 469-559; these read PSNE…LDVT, PIRI…IAVT, and ANLT…KDVT. A disulfide bridge connects residues Cys291 and Cys348. Cysteines 389 and 447 form a disulfide. The cysteines at positions 490 and 543 are disulfide-linked. Ser819 carries the post-translational modification Phosphoserine. Residues Asn820, Asn958, and Asn963 are each glycosylated (N-linked (GlcNAc...) asparagine). Residues 842–1006 enclose the GAIN-B domain; the sequence is TPPFLFHPNV…SILMSPDSPD (165 aa). 2 cysteine pairs are disulfide-bonded: Cys954-Cys988 and Cys973-Cys990. Positions 954–1006 are GPS; the sequence is CVFWNFSLANNTGGWDSSGCTVEDDGRDNRDRVFCKCNHLTSFSILMSPDSPD. The segment at 994–1009 is tethered agonist; that stretch reads TSFSILMSPDSPDPGS. Residues 1017 to 1036 traverse the membrane as a helical segment; that stretch reads IISYIGLGFSIVSLAACLVV. The Cytoplasmic segment spans residues 1037 to 1055; the sequence is EAMVWKSVTKNRTSYMRHI. The chain crosses the membrane as a helical span at residues 1056–1078; the sequence is CIVNIALCLLIADIWFIVAGAIH. Residues 1079-1097 lie on the Extracellular side of the membrane; that stretch reads DGHYPLNETACVAATFFIH. Asn1085 carries N-linked (GlcNAc...) asparagine glycosylation. A helical transmembrane segment spans residues 1098–1120; sequence FFYLSVFFWMLTLGLMLFYRLIF. The Cytoplasmic segment spans residues 1121–1131; sequence ILHDASKSTQK. The chain crosses the membrane as a helical span at residues 1132 to 1154; it reads AIAFSLGYGCPLIISSITVGVTQ. Residues 1155-1173 are Extracellular-facing; sequence PQEVYMRKNACWLNWEDTR. The chain crosses the membrane as a helical span at residues 1174–1196; sequence ALLAFAIPALIIVVVNVSITVVV. Over 1197 to 1216 the chain is Cytoplasmic; it reads ITKILRPSVGDKPGKQEKSS. Residues 1217–1239 traverse the membrane as a helical segment; the sequence is LFQISKSIGVLTPLLGLTWGFGL. Residues 1240-1248 are Extracellular-facing; the sequence is ATVIQGSNA. A helical membrane pass occupies residues 1249–1271; that stretch reads VFHIIFTLLNAFQGLFILLFGCL. Over 1272–1349 the chain is Cytoplasmic; it reads WDQKVQEALL…NSSSAYSLLN (78 aa). Position 1303 is a phosphothreonine (Thr1303). At Ser1310 the chain carries Phosphoserine. Low complexity predominate over residues 1329–1343; that stretch reads STPETTSSSVENSSS. The tract at residues 1329-1349 is disordered; that stretch reads STPETTSSSVENSSSAYSLLN.

This sequence belongs to the G-protein coupled receptor 2 family. Adhesion G-protein coupled receptor (ADGR) subfamily. In terms of assembly, homodimer; disulfide-linked. Heterodimer of 2 chains generated by proteolytic processing; the large extracellular N-terminal fragment and the membrane-bound C-terminal fragment predominantly remain associated and non-covalently linked. Fragment generates by the processing enzyme furin remains attached to the extracellular N-terminal fragment. Interacts (via N-terminal extracellular domain) with SFTPD. Post-translationally, highly glycosylated. Proteolytically cleaved at multiple sites: one in the GPS region of the GAIN-B domain (S1 site) and the other in the SEA domain (S2 site). The proteolytic cleavage at S1 site generates an extracellular subunit and a seven-transmembrane subunit. The proteolytic cleavage at S2 site generates a fragment that undergoes proteolytic cleavage by the processing enzyme furin. Highly expressed in the lung and to a much lesser extent in the kidney and heart. Dense localization in alveolar walls of the lung and in the intercalated cells of the collecting duct of the kidney.

The protein localises to the cell membrane. As an adhesion G protein-coupled receptor (aGPCR) exhibits a large N-terminal extracellular domain containing highly conserved GPCR autoproteolysis-inducing (GAIN) domain. During synthesis, intracellular autoproteolytic processing of nascent chain within the GAIN domain generates a mature protein, consisting of an N-terminal fragment that is non-covalently linked to the C-terminal fragment. The mature protein is routed to the plasma membrane where the N- and C-terminal fragments remain associated, forming the holoreceptor. Dissociation of the aGPCR fragments stimulates G protein signaling through the action of the tethered-peptide agonist stalk that is occluded within the GAIN domain in the holoreceptor form. This dissociation might be induced by ligand binding, such as that of sFNDC4. Receptor that plays a critical role in lung surfactant homeostasis. May play a role in controlling adipocyte function. Its function is as follows. Adhesion G protein-coupled receptor. In alveolar type II (ATII or AT2) cells, required for normal lung surfactant homeostasis. Modulation of both surfactant secretion and uptake by ATII cells is mediated by the downstream activation of GNAQ/GNA11 proteins and may be a consequence of increased cortical F-actin assembly induced by ADGRF5 activation. In the kidney, may play a role in the regulation of acid excretion into the primary urine, possibly by regulating the surface expression of V-ATPase proton pump. As a receptor for soluble FNDC4 (sFNDC4), required for proper systemic glucose tolerance, specifically sensitizing white adipose tissue to insulin. Also plays a role in sFNDC4-induced decrease of local inflammation in white adipose tissue. In Rattus norvegicus (Rat), this protein is Adhesion G protein-coupled receptor F5 (Adgrf5).